We begin with the raw amino-acid sequence, 133 residues long: Large ribosomal subunit protein uL22 (133 aa).

It belongs to the universal ribosomal protein uL22 family. As to quaternary structure, part of the 50S ribosomal subunit.

In terms of biological role, this protein binds specifically to 23S rRNA; its binding is stimulated by other ribosomal proteins, e.g. L4, L17, and L20. It is important during the early stages of 50S assembly. It makes multiple contacts with different domains of the 23S rRNA in the assembled 50S subunit and ribosome. Functionally, the globular domain of the protein is located near the polypeptide exit tunnel on the outside of the subunit, while an extended beta-hairpin is found that lines the wall of the exit tunnel in the center of the 70S ribosome. The chain is Large ribosomal subunit protein uL22 from Nocardia farcinica (strain IFM 10152).